Here is a 616-residue protein sequence, read N- to C-terminus: Dihydroxy-acid dehydratase (616 aa).

Asp-81 is a binding site for Mg(2+). Cys-122 lines the [2Fe-2S] cluster pocket. Mg(2+) contacts are provided by Asp-123 and Lys-124. N6-carboxylysine is present on Lys-124. A [2Fe-2S] cluster-binding site is contributed by Cys-195. Glu-491 is a Mg(2+) binding site. The Proton acceptor role is filled by Ser-517.

It belongs to the IlvD/Edd family. As to quaternary structure, homodimer. It depends on [2Fe-2S] cluster as a cofactor. The cofactor is Mg(2+).

The catalysed reaction is (2R)-2,3-dihydroxy-3-methylbutanoate = 3-methyl-2-oxobutanoate + H2O. It carries out the reaction (2R,3R)-2,3-dihydroxy-3-methylpentanoate = (S)-3-methyl-2-oxopentanoate + H2O. The protein operates within amino-acid biosynthesis; L-isoleucine biosynthesis; L-isoleucine from 2-oxobutanoate: step 3/4. It participates in amino-acid biosynthesis; L-valine biosynthesis; L-valine from pyruvate: step 3/4. Functions in the biosynthesis of branched-chain amino acids. Catalyzes the dehydration of (2R,3R)-2,3-dihydroxy-3-methylpentanoate (2,3-dihydroxy-3-methylvalerate) into 2-oxo-3-methylpentanoate (2-oxo-3-methylvalerate) and of (2R)-2,3-dihydroxy-3-methylbutanoate (2,3-dihydroxyisovalerate) into 2-oxo-3-methylbutanoate (2-oxoisovalerate), the penultimate precursor to L-isoleucine and L-valine, respectively. The protein is Dihydroxy-acid dehydratase of Shewanella sediminis (strain HAW-EB3).